A 402-amino-acid polypeptide reads, in one-letter code: NADH-quinone oxidoreductase subunit D (402 aa).

The protein belongs to the complex I 49 kDa subunit family. NDH-1 is composed of 14 different subunits. Subunits NuoB, C, D, E, F, and G constitute the peripheral sector of the complex.

Its subcellular location is the cell inner membrane. It carries out the reaction a quinone + NADH + 5 H(+)(in) = a quinol + NAD(+) + 4 H(+)(out). In terms of biological role, NDH-1 shuttles electrons from NADH, via FMN and iron-sulfur (Fe-S) centers, to quinones in the respiratory chain. The immediate electron acceptor for the enzyme in this species is believed to be ubiquinone. Couples the redox reaction to proton translocation (for every two electrons transferred, four hydrogen ions are translocated across the cytoplasmic membrane), and thus conserves the redox energy in a proton gradient. The sequence is that of NADH-quinone oxidoreductase subunit D from Cereibacter sphaeroides (strain ATCC 17029 / ATH 2.4.9) (Rhodobacter sphaeroides).